The sequence spans 55 residues: Large ribosomal subunit protein bL32c (55 aa).

The interval 1 to 24 is disordered; sequence MAVPKKRTSKSKKNARKANWKRKG.

The protein belongs to the bacterial ribosomal protein bL32 family.

It localises to the plastid. The protein localises to the chloroplast. The chain is Large ribosomal subunit protein bL32c from Phaeodactylum tricornutum (strain CCAP 1055/1).